The following is a 382-amino-acid chain: 1-deoxy-D-xylulose 5-phosphate reductoisomerase (382 aa).

NADPH is bound by residues Thr10, Gly11, Ser12, Ile13, Gly36, Lys37, Asn38, and Asn121. Lys122 is a 1-deoxy-D-xylulose 5-phosphate binding site. Residue Glu123 participates in NADPH binding. Asp147 is a binding site for Mn(2+). 1-deoxy-D-xylulose 5-phosphate-binding residues include Ser148, Glu149, Ser173, and His196. Position 149 (Glu149) interacts with Mn(2+). Gly202 serves as a coordination point for NADPH. 1-deoxy-D-xylulose 5-phosphate is bound by residues Ser209, Asn214, Lys215, and Glu218. Glu218 lines the Mn(2+) pocket.

This sequence belongs to the DXR family. Mg(2+) is required as a cofactor. The cofactor is Mn(2+).

The enzyme catalyses 2-C-methyl-D-erythritol 4-phosphate + NADP(+) = 1-deoxy-D-xylulose 5-phosphate + NADPH + H(+). It participates in isoprenoid biosynthesis; isopentenyl diphosphate biosynthesis via DXP pathway; isopentenyl diphosphate from 1-deoxy-D-xylulose 5-phosphate: step 1/6. Functionally, catalyzes the NADPH-dependent rearrangement and reduction of 1-deoxy-D-xylulose-5-phosphate (DXP) to 2-C-methyl-D-erythritol 4-phosphate (MEP). The protein is 1-deoxy-D-xylulose 5-phosphate reductoisomerase of Halalkalibacterium halodurans (strain ATCC BAA-125 / DSM 18197 / FERM 7344 / JCM 9153 / C-125) (Bacillus halodurans).